Here is a 275-residue protein sequence, read N- to C-terminus: NifU-like protein 5, mitochondrial (275 aa).

The transit peptide at 1–61 (MKGLTRLLNS…TNASRNCSRS (61 aa)) directs the protein to the mitochondrion.

It belongs to the NifU family.

It localises to the mitochondrion. Molecular scaffold for [Fe-S] cluster assembly of mitochondrial iron-sulfur proteins. The chain is NifU-like protein 5, mitochondrial (NIFU5) from Arabidopsis thaliana (Mouse-ear cress).